Here is a 228-residue protein sequence, read N- to C-terminus: Imidazole glycerol phosphate synthase subunit HisH (228 aa).

The Glutamine amidotransferase type-1 domain occupies 4-218; that stretch reads DIAVVDYGMG…VTWNPGEHAS (215 aa). Catalysis depends on Cys83, which acts as the Nucleophile. Active-site residues include His193 and Glu195.

As to quaternary structure, heterodimer of HisH and HisF.

Its subcellular location is the cytoplasm. The enzyme catalyses 5-[(5-phospho-1-deoxy-D-ribulos-1-ylimino)methylamino]-1-(5-phospho-beta-D-ribosyl)imidazole-4-carboxamide + L-glutamine = D-erythro-1-(imidazol-4-yl)glycerol 3-phosphate + 5-amino-1-(5-phospho-beta-D-ribosyl)imidazole-4-carboxamide + L-glutamate + H(+). It carries out the reaction L-glutamine + H2O = L-glutamate + NH4(+). Its pathway is amino-acid biosynthesis; L-histidine biosynthesis; L-histidine from 5-phospho-alpha-D-ribose 1-diphosphate: step 5/9. In terms of biological role, IGPS catalyzes the conversion of PRFAR and glutamine to IGP, AICAR and glutamate. The HisH subunit catalyzes the hydrolysis of glutamine to glutamate and ammonia as part of the synthesis of IGP and AICAR. The resulting ammonia molecule is channeled to the active site of HisF. The sequence is that of Imidazole glycerol phosphate synthase subunit HisH from Thiobacillus denitrificans (strain ATCC 25259 / T1).